A 729-amino-acid polypeptide reads, in one-letter code: Ubiquitin carboxyl-terminal hydrolase BAP1 (729 aa).

Residues 4–235 (GWLELESDPG…IRFNLMAVVP (232 aa)) enclose the UCH catalytic domain. An Arg-finger motif motif is present at residues 56 to 60 (RRSRR). The Nucleophile role is filled by Cys-91. The active-site Proton donor is the His-169. Ser-292 bears the Phosphoserine mark. The disordered stretch occupies residues 301-351 (APAASEGNHTDGAEEAAGSCAQAPSHSPPNKPKLVVKPPGSSLNGVHPNPT). Positions 363-366 (NHNY) match the HBM-like motif motif. A phosphoserine mark is found at Ser-369 and Ser-395. 2 disordered regions span residues 372–435 (QEEE…SADG) and 464–524 (SIKT…SPVT). Over residues 395–409 (SDDEDDYEDDEEDDV) the composition is skewed to acidic residues. Polar residues predominate over residues 480 to 524 (THSQPSPTPSNESTDTASEIGSAFNSPLRSPIRSANPTRPSSPVT). Thr-493 bears the Phosphothreonine mark. Residues Ser-521, Ser-537, Ser-585, and Ser-597 each carry the phosphoserine modification. The interval 575–623 (LTEGGKGSSPSIRPIQGSQGSSSPVEKEVVEATDSREKTGMVRPGEPLS) is disordered. Polar residues predominate over residues 582-598 (SSPSIRPIQGSQGSSSP). Positions 596-721 (SSPVEKEVVE…QRKPDRRKRS (126 aa)) are interaction with BRCA1. Basic and acidic residues predominate over residues 599–614 (VEKEVVEATDSREKTG). Positions 636-656 (LKCVEAEIANYEACLKEEVEK) form a coiled coil. The tract at residues 642 to 686 (EIANYEACLKEEVEKRKKFKIDDQRRTHNYDEFICTFISMLAQEG) is interaction with YY1. The region spanning 670 to 698 (NYDEFICTFISMLAQEGMLANLVEQNISV) is the ULD domain. The interval 699 to 701 (RRR) is interaction with nucleosomal DNA forming a DNA clamp with ASXL1. The short motif at 699–722 (RRRQGVSIGRLHKQRKPDRRKRSR) is the Classical bipartite Nuclear localization signal (NLS) element. Residues 703-729 (GVSIGRLHKQRKPDRRKRSRPYKAKRQ) form a disordered region. Residues 713–729 (RKPDRRKRSRPYKAKRQ) are positively charged C-terminal extension (CTE). The short motif at 717–724 (RRKRSRPY) is the Non-classical PY-nuclear localization signal (PY-NLS) element.

It belongs to the peptidase C12 family. BAP1 subfamily. In terms of assembly, core component of the polycomb repressive deubiquitinase (PR-DUB) complex, at least composed of BAP1, one of ASXL1, ASXL2 or (probably) ASXL3, and one of MBD5 or MBD6. The PR-DUB core associates with a number of accessory proteins, including FOXK1, FOXK2, KDM1B, HCFC1, YY1 and OGT; KDM1B specifically associates with ASXL2 PR-DUB complexes. The BAP1 deubiquitinase activity is not required for PR-DUB assembly. Homodimerizes (via coiled-coil hinge-region between the UCH and ULD domains) to mediate assembly of 2 copies of the BAP1-ASXL heterodimer into a bisymmetric tetramer; dimerization enhances association with nucleosomes. The PR-DUB complex associates with nucleosomes to mediate deubiquitination of 'lys-120' of histone H2AK118ub1 substrates; the association requires the positively charged C-terminal tail of BAP1. Interacts (via ULD domain) with ASXL1 (via DEUBAD domain); the interaction is direct and forms a ubiquitin binding cleft. The interaction with ASXL1 stabilizes BAP1 but is not required for nucleosome binding. Associates (via C-terminus) with nucleosome and chromatosome complexes through direct interaction with DNA and the histone3/4 dimer; this association displaces the histone-2A C-terminal tail, extending and orienting the H2AK118ub1 substrate towards the BAP1 deubiquitinase active site. Also interacts (via arginine finger) directly with the histone H2A-H2B acidic patch; this interaction is not critical for nucleosome-chromatosome association but may play a role in orienting the H2AK118ub1 substrate towards the PR-DUB complex active site. Interacts with BRCA1 (via the RING finger). Interacts (via HBM-like motif) with HCFC1. Interacts (via a C-terminal region overlapping the ULD domain) with YY1; the interaction is direct and requires the interaction with HCFC1. Interacts (when phosphorylated at Thr-493) with FOXK1. Interacts (when phosphorylated at Thr-493) with FOXK2; leading to recruitment of the PR-DUB complex and repression of FOXK2 target genes. Interacts (via non-classical PY-NLS) with TNPO1/transportin-1 (via HEAT repeats 8-12); the interaction is direct, mediates BAP1 nuclear localization and disrupts BAP1 homodimerization. Interacts (via C-terminus) with KPNA1/importin alpha5 and KPNA2/importin alpha1; these interactions can contribute to BAP1 nuclear localization but are less important than the interaction with TNPO1/transportin-1. The interaction with TNPO1/transportin-1 disrupts homodimerization and blocks ubiquitination by UBE2O. Ubiquitinated: monoubiquitinated at multiple sites within its nuclear localization signal (NLS) BY UBE2O, leading to cytoplasmic retention. Able to mediate autodeubiquitination via intramolecular interactions to counteract cytoplasmic retention. Monoubiquitinated on at least 4 sites near or within its PY-NLS. As to expression, highly expressed in testis, placenta and ovary. Expressed in breast. levels in the placenta increase over the course of pregnancy.

The protein localises to the cytoplasm. Its subcellular location is the nucleus. It localises to the chromosome. The enzyme catalyses Thiol-dependent hydrolysis of ester, thioester, amide, peptide and isopeptide bonds formed by the C-terminal Gly of ubiquitin (a 76-residue protein attached to proteins as an intracellular targeting signal).. In terms of biological role, deubiquitinating enzyme that plays a key role in chromatin by mediating deubiquitination of histone H2A and HCFC1. Catalytic component of the polycomb repressive deubiquitinase (PR-DUB) complex, a complex that specifically mediates deubiquitination of histone H2A monoubiquitinated at 'Lys-120' (H2AK119ub1). Does not deubiquitinate monoubiquitinated histone H2B. The PR-DUB complex is an epigenetic regulator of gene expression and acts as a transcriptional coactivator, affecting genes involved in development, cell communication, signaling, cell proliferation and cell viability. Antagonizes PRC1 mediated H2AK119ub1 monoubiquitination. As part of the PR-DUB complex, associates with chromatin enriched in histone marks H3K4me1, H3K4me3, and H3K27Ac, but not in H3K27me3. Recruited to specific gene-regulatory regions by YY1. Acts as a regulator of cell growth by mediating deubiquitination of HCFC1 N-terminal and C-terminal chains, with some specificity toward 'Lys-48'-linked polyubiquitin chains compared to 'Lys-63'-linked polyubiquitin chains. Deubiquitination of HCFC1 does not lead to increase stability of HCFC1. Interferes with the BRCA1 and BARD1 heterodimer activity by inhibiting their ability to mediate ubiquitination and autoubiquitination. It however does not mediate deubiquitination of BRCA1 and BARD1. Able to mediate autodeubiquitination via intramolecular interactions to counteract monoubiquitination at the nuclear localization signal (NLS), thereby protecting it from cytoplasmic sequestration. Negatively regulates epithelial-mesenchymal transition (EMT) of trophoblast stem cells during placental development by regulating genes involved in epithelial cell integrity, cell adhesion and cytoskeletal organization. The polypeptide is Ubiquitin carboxyl-terminal hydrolase BAP1 (Homo sapiens (Human)).